Here is a 146-residue protein sequence, read N- to C-terminus: Hemoglobin subunit beta (146 aa).

The residue at position 1 (valine 1) is an N-acetylvaline. The region spanning 2–146 (HLTAEEKSAV…VANALAHKYH (145 aa)) is the Globin domain. Phosphothreonine is present on threonine 12. Lysine 59 carries the post-translational modification N6-acetyllysine. Heme b is bound at residue histidine 63. An N6-acetyllysine modification is found at lysine 82. Residue histidine 92 participates in heme b binding. Cysteine 93 is modified (S-nitrosocysteine). An N6-acetyllysine modification is found at lysine 144.

The protein belongs to the globin family. As to quaternary structure, heterotetramer of two alpha chains and two beta chains. Red blood cells.

Functionally, involved in oxygen transport from the lung to the various peripheral tissues. The protein is Hemoglobin subunit beta (HBB) of Balaenoptera acutorostrata (Common minke whale).